We begin with the raw amino-acid sequence, 307 residues long: UDP-N-acetylenolpyruvoylglucosamine reductase (307 aa).

In terms of domain architecture, FAD-binding PCMH-type spans 34–198 (TGGNADFYLS…LEAAFTLEPG (165 aa)). The active site involves R177. S227 acts as the Proton donor in catalysis. The active site involves E297.

It belongs to the MurB family. It depends on FAD as a cofactor.

It is found in the cytoplasm. The catalysed reaction is UDP-N-acetyl-alpha-D-muramate + NADP(+) = UDP-N-acetyl-3-O-(1-carboxyvinyl)-alpha-D-glucosamine + NADPH + H(+). It functions in the pathway cell wall biogenesis; peptidoglycan biosynthesis. In terms of biological role, cell wall formation. The protein is UDP-N-acetylenolpyruvoylglucosamine reductase of Staphylococcus haemolyticus (strain JCSC1435).